The chain runs to 228 residues: uncharacterized protein (228 aa).

The S-adenosyl-L-methionine site is built by G179, I199, and L208.

This sequence belongs to the class IV-like SAM-binding methyltransferase superfamily. RNA methyltransferase TrmH family.

This is an uncharacterized protein from Borreliella burgdorferi (strain ATCC 35210 / DSM 4680 / CIP 102532 / B31) (Borrelia burgdorferi).